A 253-amino-acid polypeptide reads, in one-letter code: Isoprenyl transferase (253 aa).

Asp-30 is an active-site residue. Residue Asp-30 coordinates Mg(2+). Substrate is bound by residues 31–34, Trp-35, His-51, and 79–81; these read GNRR and STE. The active-site Proton acceptor is the Asn-82. Substrate-binding positions include Phe-83, Arg-85, Arg-202, and 208–210; that span reads RVS. Mg(2+) is bound at residue Glu-221.

It belongs to the UPP synthase family. Homodimer. The cofactor is Mg(2+).

Its function is as follows. Catalyzes the condensation of isopentenyl diphosphate (IPP) with allylic pyrophosphates generating different type of terpenoids. In Chlamydia muridarum (strain MoPn / Nigg), this protein is Isoprenyl transferase.